Reading from the N-terminus, the 224-residue chain is DNA repair and recombination protein RadB (224 aa).

The protein belongs to the eukaryotic RecA-like protein family. RadB subfamily.

In terms of biological role, involved in DNA repair and in homologous recombination. May regulate the cleavage reactions of the branch-structured DNA. Has a very weak ATPase activity that is not stimulated by DNA. Binds DNA but does not promote DNA strands exchange. The chain is DNA repair and recombination protein RadB from Thermococcus onnurineus (strain NA1).